The following is a 772-amino-acid chain: MGGFMKRSQYKFYYKLITFFCLLSTIPVILVGLFSYEHSQKTAISNVSEEKFDTLQQTQQSIEHILKTVDHSLTHYVSSPPLLRTLSEPLHSDQFQIYNQVNQELNYLQSFDTDLSNMTLVSYTKKWYMNNSGLYRLNTDTLHEAASAYTKQKASRSYWTLEENNHLISTKEGTAENCRYNINLIKQLPLNSTNTKGLAAASIPSCSLVKNMPGYSNANNLFIIDEKGLIILHNNMSDVGESLHNDGFVQKVLAQTANSGQFETVIDRIHYKVTYQKSDYNAWTYFSLVSLPELKKEAKSIGWITFAVCLILLTLSLLFSWLGSRHFYKPIRVLYESFARHGAIQEKQQPPQNEFELIEQSFKQLKDRNDDLEETMKQQATHLQQYFMVRLMLGKLTDEEVDNRFESLGLKQNWRHLALLVLQIDTLNHTPYEKKDMDLLLFAVNSLIERNIPTDKHLAPAVVDKQQATILINQSGTKEEFMAELNETARMIQEKAEAELQLSVSIGISQPFDVLTKAKTAYAEGSEALKYRLKAENKSIIFYEDLDQKKTFKTHFPKQLQHELFDAVKAGDKEKADKCLHAILQAIFTQNTNPYQFQIAIARFLNHVIELMHVLGIELFELEENKMLYDQIFELKTFEDTENWLKNEFIDPMTDKVNARADAQYKNISDNIIHIIHHEFESELTLDEIARRLHYNPNYLSSIFKKEMGISFSEYVSSYRHHMAKSWLAETDMAVKDIAEKLKYKNSQNFIRSFKKLEGITPGNYRQQKRSM.

Transmembrane regions (helical) follow at residues 16–36 (LITF…LFSY) and 301–321 (IGWI…LFSW). The HTH araC/xylS-type domain occupies 670–768 (DNIIHIIHHE…GITPGNYRQQ (99 aa)). 2 DNA-binding regions (H-T-H motif) span residues 687–708 (DEIA…KKEM) and 735–758 (VKDI…KKLE).

It is found in the cell membrane. This is an uncharacterized protein from Bacillus subtilis (strain 168).